An 84-amino-acid polypeptide reads, in one-letter code: Acyl carrier protein MbtL (84 aa).

Residues 6-81 form the Carrier domain; sequence STVSTTLLSI…ELEAAIAAKY (76 aa). Serine 41 carries the O-(pantetheine 4'-phosphoryl)serine modification.

In terms of processing, 4'-phosphopantetheine is transferred from CoA to a specific serine of apo-ACP, leading to the activated holo-ACP form.

It localises to the cytoplasm. It participates in siderophore biosynthesis; mycobactin biosynthesis. Acyl carrier protein involved in the formation of acyl-S-ACP intermediates within the mycobactin biosynthesis process. The aliphatic chains carried by ACP are subsequently transferred on to the mycobactin core by MbtK. The polypeptide is Acyl carrier protein MbtL (mbtL) (Mycobacterium bovis (strain ATCC BAA-935 / AF2122/97)).